The primary structure comprises 271 residues: Mannosyl-3-phosphoglycerate phosphatase (271 aa).

The Nucleophile role is filled by Asp-13. Residues Asp-13, Asp-15, and Asp-214 each coordinate Mg(2+).

Belongs to the HAD-like hydrolase superfamily. MPGP family. Requires Mg(2+) as cofactor.

It localises to the cytoplasm. The catalysed reaction is 2-O-(alpha-D-mannosyl)-3-phosphoglycerate + H2O = (2R)-2-O-(alpha-D-mannosyl)-glycerate + phosphate. The protein is Mannosyl-3-phosphoglycerate phosphatase (yedP) of Shigella boydii serotype 4 (strain Sb227).